The primary structure comprises 423 residues: Glutamate-1-semialdehyde 2,1-aminomutase (423 aa).

Lysine 262 is subject to N6-(pyridoxal phosphate)lysine.

This sequence belongs to the class-III pyridoxal-phosphate-dependent aminotransferase family. HemL subfamily. In terms of assembly, homodimer. Requires pyridoxal 5'-phosphate as cofactor.

It is found in the cytoplasm. The enzyme catalyses (S)-4-amino-5-oxopentanoate = 5-aminolevulinate. It participates in porphyrin-containing compound metabolism; protoporphyrin-IX biosynthesis; 5-aminolevulinate from L-glutamyl-tRNA(Glu): step 2/2. In Campylobacter fetus subsp. fetus (strain 82-40), this protein is Glutamate-1-semialdehyde 2,1-aminomutase.